The sequence spans 275 residues: Cytochrome c oxidase subunit 3 (275 aa).

The next 7 membrane-spanning stretches (helical) occupy residues 22–42, 52–72, 96–116, 132–152, 173–193, 211–231, and 253–273; these read PWPL…VMYF, SGAL…ALWF, GVAL…WAFF, PVGI…ILLL, AILG…CQGI, FFFS…FIAV, and ILYW…VYWW.

Belongs to the cytochrome c oxidase subunit 3 family. In terms of assembly, component of the cytochrome c oxidase (complex IV, CIV), a multisubunit enzyme composed of a catalytic core of 3 subunits and several supernumerary subunits. The complex exists as a monomer or a dimer and forms supercomplexes (SCs) in the inner mitochondrial membrane with ubiquinol-cytochrome c oxidoreductase (cytochrome b-c1 complex, complex III, CIII).

It is found in the mitochondrion inner membrane. The enzyme catalyses 4 Fe(II)-[cytochrome c] + O2 + 8 H(+)(in) = 4 Fe(III)-[cytochrome c] + 2 H2O + 4 H(+)(out). In terms of biological role, component of the cytochrome c oxidase, the last enzyme in the mitochondrial electron transport chain which drives oxidative phosphorylation. The respiratory chain contains 3 multisubunit complexes succinate dehydrogenase (complex II, CII), ubiquinol-cytochrome c oxidoreductase (cytochrome b-c1 complex, complex III, CIII) and cytochrome c oxidase (complex IV, CIV), that cooperate to transfer electrons derived from NADH and succinate to molecular oxygen, creating an electrochemical gradient over the inner membrane that drives transmembrane transport and the ATP synthase. Cytochrome c oxidase is the component of the respiratory chain that catalyzes the reduction of oxygen to water. Electrons originating from reduced cytochrome c in the intermembrane space (IMS) are transferred via the dinuclear copper A center (CU(A)) of subunit 2 and heme A of subunit 1 to the active site in subunit 1, a binuclear center (BNC) formed by heme A3 and copper B (CU(B)). The BNC reduces molecular oxygen to 2 water molecules using 4 electrons from cytochrome c in the IMS and 4 protons from the mitochondrial matrix. This Mycosarcoma maydis (Corn smut fungus) protein is Cytochrome c oxidase subunit 3 (COX3).